The primary structure comprises 216 residues: Dimethylamine corrinoid protein 2 (216 aa).

In terms of domain architecture, B12-binding N-terminal spans 1-91 (MASKEELLQE…EMPAGTETKK (91 aa)). A B12-binding domain is found at 92 to 216 (LGVIVNGTVE…AKAKELLLGK (125 aa)). Residue H105 participates in methylcob(III)alamin binding.

Belongs to the methylamine corrinoid protein family.

It functions in the pathway one-carbon metabolism; methanogenesis from dimethylamine. Functionally, acts as a methyl group carrier between MtbB and MtbA. This chain is Dimethylamine corrinoid protein 2 (mtbC2), found in Methanosarcina acetivorans (strain ATCC 35395 / DSM 2834 / JCM 12185 / C2A).